Consider the following 567-residue polypeptide: 2-succinyl-5-enolpyruvyl-6-hydroxy-3-cyclohexene-1-carboxylate synthase (567 aa).

This sequence belongs to the TPP enzyme family. MenD subfamily. Homodimer. It depends on Mg(2+) as a cofactor. The cofactor is Mn(2+). Requires thiamine diphosphate as cofactor.

It catalyses the reaction isochorismate + 2-oxoglutarate + H(+) = 5-enolpyruvoyl-6-hydroxy-2-succinyl-cyclohex-3-ene-1-carboxylate + CO2. Its pathway is quinol/quinone metabolism; 1,4-dihydroxy-2-naphthoate biosynthesis; 1,4-dihydroxy-2-naphthoate from chorismate: step 2/7. The protein operates within quinol/quinone metabolism; menaquinone biosynthesis. Its function is as follows. Catalyzes the thiamine diphosphate-dependent decarboxylation of 2-oxoglutarate and the subsequent addition of the resulting succinic semialdehyde-thiamine pyrophosphate anion to isochorismate to yield 2-succinyl-5-enolpyruvyl-6-hydroxy-3-cyclohexene-1-carboxylate (SEPHCHC). This chain is 2-succinyl-5-enolpyruvyl-6-hydroxy-3-cyclohexene-1-carboxylate synthase, found in Yersinia pseudotuberculosis serotype IB (strain PB1/+).